Here is a 250-residue protein sequence, read N- to C-terminus: Golgi SNAP receptor complex member 1 (250 aa).

Ala-2 is modified (N-acetylalanine). The Cytoplasmic portion of the chain corresponds to 2 to 229; the sequence is AAGTSNYWED…QRINLRKRRD (228 aa). Residues 10–30 adopt a coiled-coil conformation; that stretch reads EDLRKQARQLENELDLKLVSF. The segment at 39 to 59 is disordered; it reads HSSARDGRRDRYSSDTTPLLN. Basic and acidic residues predominate over residues 41–51; that stretch reads SARDGRRDRYS. Residues 70 to 93 are a coiled coil; it reads MAIEIEQLLARLTGINDKMAEYTS. The residue at position 141 (Ser-141) is a Phosphoserine. The helical; Anchor for type IV membrane protein transmembrane segment at 230–250 threads the bilayer; it reads SLILGGVIGVCTILLLLYAFH.

The protein belongs to the GOSR1 family. As to quaternary structure, component of several multiprotein Golgi SNARE complexes. Identified in a SNARE complex with BET1, STX5 and YKT6, in a SNARE complex with BET1L, STX5 and YKT6, in a SNARE complex with STX5, GOSR2, SEC22B and BET1, and in complex with STX5 and COG3. Interacts with GABARAPL2.

It is found in the golgi apparatus membrane. Functionally, involved in transport from the ER to the Golgi apparatus as well as in intra-Golgi transport. It belongs to a super-family of proteins called t-SNAREs or soluble NSF (N-ethylmaleimide-sensitive factor) attachment protein receptor. May play a protective role against hydrogen peroxide induced cytotoxicity under glutathione depleted conditions in neuronal cells by regulating the intracellular ROS levels via inhibition of p38 MAPK (MAPK11, MAPK12, MAPK13 and MAPK14). Participates in docking and fusion stage of ER to cis-Golgi transport. Plays an important physiological role in VLDL-transport vesicle-Golgi fusion and thus in VLDL delivery to the hepatic cis-Golgi. The chain is Golgi SNAP receptor complex member 1 (GOSR1) from Bos taurus (Bovine).